We begin with the raw amino-acid sequence, 166 residues long: Small ribosomal subunit protein uS5 (166 aa).

The S5 DRBM domain maps to 11-74 (LQEKLIAVNR…EKARRNMINV (64 aa)).

The protein belongs to the universal ribosomal protein uS5 family. Part of the 30S ribosomal subunit. Contacts proteins S4 and S8.

In terms of biological role, with S4 and S12 plays an important role in translational accuracy. Functionally, located at the back of the 30S subunit body where it stabilizes the conformation of the head with respect to the body. This Cronobacter sakazakii (strain ATCC BAA-894) (Enterobacter sakazakii) protein is Small ribosomal subunit protein uS5.